Reading from the N-terminus, the 198-residue chain is Chitin synthase 2 (198 aa).

The protein belongs to the chitin synthase family. Class III subfamily.

It localises to the cell membrane. The catalysed reaction is [(1-&gt;4)-N-acetyl-beta-D-glucosaminyl](n) + UDP-N-acetyl-alpha-D-glucosamine = [(1-&gt;4)-N-acetyl-beta-D-glucosaminyl](n+1) + UDP + H(+). In terms of biological role, polymerizes chitin, a structural polymer of the cell wall and septum, by transferring the sugar moiety of UDP-GlcNAc to the non-reducing end of the growing chitin polymer. The polypeptide is Chitin synthase 2 (CHS2) (Rhinocladiella atrovirens).